The primary structure comprises 2066 residues: Kinesin-like protein KIN-12C (2066 aa).

Disordered stretches follow at residues M1–Q41 and R59–L116. Residues S20–S33 show a composition bias toward low complexity. Basic and acidic residues predominate over residues G67–E76. Positions E99 to R109 are enriched in polar residues. Residues N168 to I505 form the Kinesin motor domain. G249–T256 is an ATP binding site. 3 microtubules-binding regions span residues S375–H379, V406–E412, and H454–R458. Coiled coils occupy residues D1521–I1618 and K1650–L1772. 2 disordered regions span residues S1803–S1823 and K2043–R2066. Positions V1905–H2051 form a coiled coil. Over residues T2047–R2066 the composition is skewed to polar residues.

Belongs to the TRAFAC class myosin-kinesin ATPase superfamily. Kinesin family. KIN-12 subfamily. Interacts with TAN. Interacts with RANGAP1. Expressed in tissues enriched in dividing cells, such as root meristems, root primordia, and leaf primordia/young leaves.

The protein resides in the cytoplasm. The protein localises to the cytoskeleton. It localises to the phragmoplast. Functionally, involved in the spatial control of cytokinesis by a proper phragmoplast guidance. Localizes TAN to the cortical division sites (CDS) during cytokinesis via direct binding. The protein is Kinesin-like protein KIN-12C of Arabidopsis thaliana (Mouse-ear cress).